Consider the following 415-residue polypeptide: NAD-dependent protein deacetylase hst4 (415 aa).

Positions 1–26 (MKVEEHVPLIQESRKRKCQSSENASK) are disordered. The Deacetylase sirtuin-type domain maps to 40–337 (TGNENVDLSP…RRLKPLLDAP (298 aa)). NAD(+)-binding positions include 65–84 (GAGI…EGLF) and 153–156 (QNID). Residue histidine 184 is the Proton acceptor of the active site. The Zn(2+) site is built by cysteine 192, cysteine 195, cysteine 214, and cysteine 217. NAD(+) contacts are provided by residues 273 to 275 (GTS), 303 to 305 (NYD), and leucine 323.

This sequence belongs to the sirtuin family. Class I subfamily. It depends on Zn(2+) as a cofactor.

The protein resides in the nucleus. The protein localises to the nucleolus. The enzyme catalyses N(6)-acetyl-L-lysyl-[protein] + NAD(+) + H2O = 2''-O-acetyl-ADP-D-ribose + nicotinamide + L-lysyl-[protein]. NAD-dependent histone deacetylase, which contributes to both telomeric and centromeric silencing, proper cell cycle progression, DNA damage control, recombination, and genomic maintenance. The polypeptide is NAD-dependent protein deacetylase hst4 (hst4) (Schizosaccharomyces pombe (strain 972 / ATCC 24843) (Fission yeast)).